A 190-amino-acid polypeptide reads, in one-letter code: NADH-dependent phenylglyoxylate dehydrogenase subunit gamma (190 aa).

Dimer of heteropentamers composed of an alpha (PadG), a beta (PadI), a gamma (PadE), a delta (PadF) and an epsilon (PadH) subunit.

It carries out the reaction phenylglyoxylate + NAD(+) + CoA = benzoyl-CoA + CO2 + NADH. Activated by magnesium ions and thiamine diphosphate. Involved in the anaerobic metabolism of phenylalanine and phenylacetate. Catalyzes the oxidative decarboxylation of phenylglyoxylate to benzoyl-CoA and CO(2). It can also react slowly with 2-oxo-3-methylbutanoate and use different electron acceptors such as benzyl viologen, methyl viologen, FAD or FMN, but NAD seems to be the physiological electron acceptor. Also catalyzes an isotope exchange between CO(2) and the carboxyl group which proves partial or complete reversibility of the oxidative decarboxylation reaction. This Aromatoleum evansii (Azoarcus evansii) protein is NADH-dependent phenylglyoxylate dehydrogenase subunit gamma (padE).